The sequence spans 115 residues: MALDPEIASRLKRNADGLFTAVAQERGTGQVLMVAWMDDIALDRTMRTRNATYWSRSRGEHWVKGETSGHTQHVHSVRLDCDGDTVLLEVEQSGPACHTGTHTCFDADVLLAPEA.

D80 is a Mg(2+) binding site. C81 lines the Zn(2+) pocket. Mg(2+) contacts are provided by D82 and D84. Zn(2+) contacts are provided by C97 and C104.

Belongs to the PRA-CH family. In terms of assembly, homodimer. The cofactor is Mg(2+). Zn(2+) is required as a cofactor.

The protein localises to the cytoplasm. The enzyme catalyses 1-(5-phospho-beta-D-ribosyl)-5'-AMP + H2O = 1-(5-phospho-beta-D-ribosyl)-5-[(5-phospho-beta-D-ribosylamino)methylideneamino]imidazole-4-carboxamide. It participates in amino-acid biosynthesis; L-histidine biosynthesis; L-histidine from 5-phospho-alpha-D-ribose 1-diphosphate: step 3/9. Catalyzes the hydrolysis of the adenine ring of phosphoribosyl-AMP. The protein is Phosphoribosyl-AMP cyclohydrolase of Mycobacterium sp. (strain MCS).